A 474-amino-acid polypeptide reads, in one-letter code: Glutamate--tRNA ligase 1 (474 aa).

Positions 10–20 (PSPTGFLHIGG) match the 'HIGH' region motif. The short motif at 239-243 (KLSKR) is the 'KMSKS' region element. Residue K242 participates in ATP binding.

It belongs to the class-I aminoacyl-tRNA synthetase family. Glutamate--tRNA ligase type 1 subfamily. In terms of assembly, monomer.

It localises to the cytoplasm. It catalyses the reaction tRNA(Glu) + L-glutamate + ATP = L-glutamyl-tRNA(Glu) + AMP + diphosphate. Catalyzes the attachment of glutamate to tRNA(Glu) in a two-step reaction: glutamate is first activated by ATP to form Glu-AMP and then transferred to the acceptor end of tRNA(Glu). This Methylobacterium sp. (strain 4-46) protein is Glutamate--tRNA ligase 1.